The chain runs to 338 residues: Ornithine carbamoyltransferase, catabolic (338 aa).

Residues 58-61, glutamine 85, arginine 109, and 136-139 contribute to the carbamoyl phosphate site; these read STRT and HPTQ. Residues asparagine 168, aspartate 232, and 236–237 each bind L-ornithine; that span reads SM. Carbamoyl phosphate is bound by residues 273–274 and arginine 318; that span reads CL.

It belongs to the aspartate/ornithine carbamoyltransferase superfamily. OTCase family.

It localises to the cytoplasm. It catalyses the reaction carbamoyl phosphate + L-ornithine = L-citrulline + phosphate + H(+). Its pathway is amino-acid degradation; L-arginine degradation via ADI pathway; carbamoyl phosphate from L-arginine: step 2/2. Its function is as follows. Reversibly catalyzes the transfer of the carbamoyl group from carbamoyl phosphate (CP) to the N(epsilon) atom of ornithine (ORN) to produce L-citrulline. This is Ornithine carbamoyltransferase, catabolic from Streptococcus pneumoniae serotype 4 (strain ATCC BAA-334 / TIGR4).